The chain runs to 85 residues: Large ribosomal subunit protein bL27 (85 aa).

The interval 1 to 21 (MAHKKGGGTTRNGRDSESKRL) is disordered.

Belongs to the bacterial ribosomal protein bL27 family.

In Janthinobacterium sp. (strain Marseille) (Minibacterium massiliensis), this protein is Large ribosomal subunit protein bL27.